Reading from the N-terminus, the 405-residue chain is Scramblase ANY1 (405 aa).

The Cytoplasmic portion of the chain corresponds to methionine 1 to phenylalanine 51. The chain crosses the membrane as a helical span at residues isoleucine 52–isoleucine 72. At glutamate 73–lysine 76 the chain is on the lumenal side. A helical membrane pass occupies residues threonine 77–isoleucine 97. Topologically, residues serine 98 to threonine 103 are cytoplasmic. Residues proline 104–leucine 124 traverse the membrane as a helical segment. The Lumenal portion of the chain corresponds to arginine 125–serine 177. Residues leucine 178 to isoleucine 198 traverse the membrane as a helical segment. The Cytoplasmic portion of the chain corresponds to leucine 199–arginine 223. The helical transmembrane segment at phenylalanine 224 to asparagine 244 threads the bilayer. Residues tryptophan 245–serine 254 lie on the Lumenal side of the membrane. In terms of domain architecture, PQ-loop spans leucine 252–asparagine 309. Residues isoleucine 255–leucine 275 form a helical membrane-spanning segment. At tyrosine 276–glycine 283 the chain is on the cytoplasmic side. The chain crosses the membrane as a helical span at residues phenylalanine 284 to glycine 306. Residues alanine 307–alanine 312 are Lumenal-facing. Residues leucine 313–tyrosine 335 traverse the membrane as a helical segment. The Cytoplasmic segment spans residues arginine 336–leucine 405. A disordered region spans residues leucine 379–leucine 405. A compositionally biased stretch (polar residues) spans glycine 396–leucine 405.

Interacts with NEO1.

It is found in the golgi apparatus membrane. Its subcellular location is the late endosome membrane. Phospholipid scramblase that transports phosphatidylserine (PS) and phosphatidylethalonamine (PE) bidirectionally from one leaflet to the other of the phospholipid bilayer to at least partially collapse the membrane asymmetry established by NEO1 and other flippases. The PS scramblase activity has been disputed. Functions in the trafficking pathway from endosomes to the trans-Golgi network (TGN). The protein is Scramblase ANY1 of Saccharomyces cerevisiae (strain ATCC 204508 / S288c) (Baker's yeast).